We begin with the raw amino-acid sequence, 197 residues long: Casparian strip membrane protein 3 (197 aa).

At 1–35 (MSARVDIPADTSAAAKGTAPLIAASTHVKGGYKKG) the chain is on the cytoplasmic side. A helical transmembrane segment spans residues 36–56 (LAIFDLVLRLGAVVTALAAAA). The Extracellular portion of the chain corresponds to 57-85 (TMGTTDQTLPFFTQFFQFQASYDDLPTFQ). A helical transmembrane segment spans residues 86–106 (FFVIAMAIVSGYLVLSLPFSI). Residues 107–119 (VAIIRPHATGPRL) are Cytoplasmic-facing. A helical transmembrane segment spans residues 120–140 (LLIILDTVALTLNTAAAAAAV). The Extracellular segment spans residues 141 to 171 (AIVDLAQNGNSSANWLGICQQFGDFCQKASG). An N-linked (GlcNAc...) asparagine glycan is attached at Asn150. Residues 172-192 (AVVASFIAAGVLLFLIVISAL) traverse the membrane as a helical segment. At 193–197 (ALRKR) the chain is on the cytoplasmic side.

The protein belongs to the Casparian strip membrane proteins (CASP) family. In terms of assembly, homodimer and heterodimers.

It is found in the cell membrane. Its function is as follows. Regulates membrane-cell wall junctions and localized cell wall deposition. Required for establishment of the Casparian strip membrane domain (CSD) and the subsequent formation of Casparian strips, a cell wall modification of the root endodermis that determines an apoplastic barrier between the intraorganismal apoplasm and the extraorganismal apoplasm and prevents lateral diffusion. This chain is Casparian strip membrane protein 3, found in Populus trichocarpa (Western balsam poplar).